We begin with the raw amino-acid sequence, 687 residues long: Protein 4.2 (687 aa).

Residue G2 is the site of N-myristoyl glycine attachment. A band 3 binding region spans residues 31-39 (LFVRRGQPF). A Phosphoserine modification is found at S247.

The protein belongs to the transglutaminase superfamily. Transglutaminase family. As to quaternary structure, component of the ankyrin-1 complex in the erythrocyte, composed of ANK1, RHCE, RHAG, SLC4A1, EPB42, GYPA, GYPB and AQP1. Interacts with SLC4A1 (via the cytoplasmic domain); this interaction is mediated by the SLC4A1 Band 3-I dimer. Interacts with ANK1 (via ANK 1-13 repeats). Interacts with AQP1 (via the C-terminal).

It is found in the cell membrane. It localises to the cytoplasm. The protein localises to the cytoskeleton. In terms of biological role, component of the ankyrin-1 complex, a multiprotein complex involved in the stability and shape of the erythrocyte membrane. In Bos taurus (Bovine), this protein is Protein 4.2.